Consider the following 564-residue polypeptide: NAC domain-containing protein 16 (564 aa).

The region spanning Ser-16–Lys-166 is the NAC domain. A DNA-binding region spans residues Val-115–Lys-172. The chain crosses the membrane as a helical span at residues Phe-535 to Val-555.

In terms of tissue distribution, expressed in roots, rosette leaves, shoot apex, stems and flowers.

Its subcellular location is the membrane. The protein localises to the nucleus. Functionally, transcriptional activator activated by proteolytic cleavage through regulated intramembrane proteolysis (RIP). Transcriptional activator that promotes leaf senescence by up-regulating senescence-associated genes in response to developmental and stress-induced senescence signals. Functions in salt and oxidative stress-responsive signaling pathways. Binds to the promoter of NAC029/NAP and NAC059/ORS1 genes. This Arabidopsis thaliana (Mouse-ear cress) protein is NAC domain-containing protein 16.